Here is a 156-residue protein sequence, read N- to C-terminus: Protein-export protein SecB (156 aa).

This sequence belongs to the SecB family. As to quaternary structure, homotetramer, a dimer of dimers. One homotetramer interacts with 1 SecA dimer.

The protein resides in the cytoplasm. One of the proteins required for the normal export of preproteins out of the cell cytoplasm. It is a molecular chaperone that binds to a subset of precursor proteins, maintaining them in a translocation-competent state. It also specifically binds to its receptor SecA. The chain is Protein-export protein SecB from Yersinia enterocolitica serotype O:8 / biotype 1B (strain NCTC 13174 / 8081).